Consider the following 147-residue polypeptide: Globin, major monomeric component (147 aa).

Residues 1–146 form the Globin domain; that stretch reads GLSAAQRQVI…ISGALISGLQ (146 aa). Position 90 (His-90) interacts with heme b.

It belongs to the globin family. In terms of assembly, monomer.

This chain is Globin, major monomeric component, found in Glycera dibranchiata (Bloodworm).